The primary structure comprises 505 residues: MLTPRVLRALGWTGLFFLLLSPSNVLGASLSRDLEHPILSFDPSNISINGAPLTEVPHAPSTESVSTNSESTNEHTITETTGKNAYIHNNASTDKQNANDTHKTPNILCDTEEVFVFLNETGRFVCTLKVDPPSDSEWSNFVLDLIFNPIEYHANEKNVEAARIAGLYGVPGSDYAYPRQSELISSIRRDPQGTFWTSPSPHGNKYFIWINKTTNTMGVEIRNVDYADNGYMQVIMRDHFNRPLIDKHIYIRVCQRPASVDVLAPPVLSGENYKASCIVRHFYPPGSVYVSWRQNGNIATPRKDRDGSFWWFESGRGATLVSTITLGNSGIDFPPKISCLVAWKQGDMISTTNATAIPTVYHHPRLSLAFKDGYAICTIECVPSEITVRWLVHDEAQPNTTYNTVVTGLCRTIDRHRNLLSRIPVWDNWTKTKYTCRLIGYPFDEDKFQDSEYYDATPSARGTPMVITVNGSFGIGCNFRVGDNHDCPMFIHSTRKIFDYNLIVM.

The first 27 residues, 1–27 (MLTPRVLRALGWTGLFFLLLSPSNVLG), serve as a signal peptide directing secretion. Topologically, residues 28-464 (ASLSRDLEHP…DATPSARGTP (437 aa)) are virion surface. Asparagine 45 carries N-linked (GlcNAc...) asparagine; by host glycosylation. A disordered region spans residues 51 to 85 (APLTEVPHAPSTESVSTNSESTNEHTITETTGKNA). Over residues 61–71 (STESVSTNSES) the composition is skewed to low complexity. Residues asparagine 90, asparagine 99, asparagine 119, asparagine 211, asparagine 353, asparagine 399, and asparagine 428 are each glycosylated (N-linked (GlcNAc...) asparagine; by host). An Ig-like domain is found at 257-355 (PASVDVLAPP…GDMISTTNAT (99 aa)). A helical membrane pass occupies residues 465–491 (MVITVNGSFGIGCNFRVGDNHDCPMFI). Residues 492–505 (HSTRKIFDYNLIVM) are Cytoplasmic-facing.

This sequence belongs to the herpesviridae glycoprotein C family.

It is found in the secreted. The protein localises to the host cell membrane. Its function is as follows. May play an immunoevasive role in the pathogenesis of Marek's disease. It is a candidate for causing the early-stage immunosuppression that occurs after MDHV infection. This chain is Envelope glycoprotein C homolog (gC), found in Gallid herpesvirus 2 (strain GA) (GaHV-2).